The primary structure comprises 293 residues: Diaminopimelate epimerase (293 aa).

The substrate site is built by Asn17, Gln47, and Asn67. The active-site Proton donor is the Cys76. Residues 77 to 78 (GN), Asn164, Asn197, and 215 to 216 (ER) contribute to the substrate site. The active-site Proton acceptor is Cys224. Position 225 to 226 (225 to 226 (GS)) interacts with substrate.

This sequence belongs to the diaminopimelate epimerase family. Homodimer.

Its subcellular location is the cytoplasm. It carries out the reaction (2S,6S)-2,6-diaminopimelate = meso-2,6-diaminopimelate. It functions in the pathway amino-acid biosynthesis; L-lysine biosynthesis via DAP pathway; DL-2,6-diaminopimelate from LL-2,6-diaminopimelate: step 1/1. Its function is as follows. Catalyzes the stereoinversion of LL-2,6-diaminopimelate (L,L-DAP) to meso-diaminopimelate (meso-DAP), a precursor of L-lysine and an essential component of the bacterial peptidoglycan. The polypeptide is Diaminopimelate epimerase (Rhodopseudomonas palustris (strain BisB5)).